Here is a 119-residue protein sequence, read N- to C-terminus: Large ribosomal subunit protein uL18 (119 aa).

Residues 1-25 (MITKIDKNKVRKKRHARVRSKISGT) form a disordered region. Basic residues predominate over residues 9–20 (KVRKKRHARVRS).

This sequence belongs to the universal ribosomal protein uL18 family. Part of the 50S ribosomal subunit; part of the 5S rRNA/L5/L18/L25 subcomplex. Contacts the 5S and 23S rRNAs.

In terms of biological role, this is one of the proteins that bind and probably mediate the attachment of the 5S RNA into the large ribosomal subunit, where it forms part of the central protuberance. In Listeria innocua serovar 6a (strain ATCC BAA-680 / CLIP 11262), this protein is Large ribosomal subunit protein uL18.